The chain runs to 274 residues: NH(3)-dependent NAD(+) synthetase (274 aa).

46–53 (GISGGQDS) is an ATP binding site. Asp52 is a Mg(2+) binding site. Residue Arg140 coordinates deamido-NAD(+). Thr160 is a binding site for ATP. Residue Glu165 coordinates Mg(2+). Deamido-NAD(+)-binding residues include Lys173 and Asp180. ATP-binding residues include Lys189 and Thr211. 260-261 (HK) contributes to the deamido-NAD(+) binding site.

The protein belongs to the NAD synthetase family. Homodimer.

It catalyses the reaction deamido-NAD(+) + NH4(+) + ATP = AMP + diphosphate + NAD(+) + H(+). It functions in the pathway cofactor biosynthesis; NAD(+) biosynthesis; NAD(+) from deamido-NAD(+) (ammonia route): step 1/1. In terms of biological role, catalyzes the ATP-dependent amidation of deamido-NAD to form NAD. Uses ammonia as a nitrogen source. The chain is NH(3)-dependent NAD(+) synthetase from Pectobacterium carotovorum subsp. carotovorum (strain PC1).